A 209-amino-acid polypeptide reads, in one-letter code: Small ribosomal subunit protein uS5 (209 aa).

The S5 DRBM domain occupies 48-111 (LEDEVLDINM…DAAKLNITYI (64 aa)).

Belongs to the universal ribosomal protein uS5 family. In terms of assembly, part of the 30S ribosomal subunit. Contacts protein S4.

With S4 and S12 plays an important role in translational accuracy. The polypeptide is Small ribosomal subunit protein uS5 (Methanosarcina acetivorans (strain ATCC 35395 / DSM 2834 / JCM 12185 / C2A)).